A 383-amino-acid polypeptide reads, in one-letter code: Histidinol-phosphate aminotransferase (383 aa).

Residue K240 is modified to N6-(pyridoxal phosphate)lysine.

This sequence belongs to the class-II pyridoxal-phosphate-dependent aminotransferase family. Histidinol-phosphate aminotransferase subfamily. In terms of assembly, homodimer. Pyridoxal 5'-phosphate is required as a cofactor.

The catalysed reaction is L-histidinol phosphate + 2-oxoglutarate = 3-(imidazol-4-yl)-2-oxopropyl phosphate + L-glutamate. It functions in the pathway amino-acid biosynthesis; L-histidine biosynthesis; L-histidine from 5-phospho-alpha-D-ribose 1-diphosphate: step 7/9. This Oleidesulfovibrio alaskensis (strain ATCC BAA-1058 / DSM 17464 / G20) (Desulfovibrio alaskensis) protein is Histidinol-phosphate aminotransferase.